The chain runs to 163 residues: Small ribosomal subunit protein bS18c (163 aa).

Disordered stretches follow at residues 1-52 and 144-163; these read MYIS…IGPG and NLRN…SSDC. Over residues 7–48 the composition is skewed to basic residues; that stretch reads PFRKSKQPFRKSKQTFHKSKQPFRKFKQPFRKSKQPFRRRSR.

It belongs to the bacterial ribosomal protein bS18 family. Part of the 30S ribosomal subunit.

Its subcellular location is the plastid. The protein localises to the chloroplast. This chain is Small ribosomal subunit protein bS18c, found in Sorghum bicolor (Sorghum).